A 178-amino-acid chain; its full sequence is Riboflavin kinase (178 aa).

Thr-39 and Asn-41 together coordinate Mg(2+). The active-site Nucleophile is the Glu-116.

Belongs to the flavokinase family. Zn(2+) serves as cofactor. Mg(2+) is required as a cofactor.

The enzyme catalyses riboflavin + ATP = FMN + ADP + H(+). It participates in cofactor biosynthesis; FMN biosynthesis; FMN from riboflavin (ATP route): step 1/1. In terms of biological role, catalyzes the phosphorylation of riboflavin (vitamin B2) to form flavin mononucleotide (FMN) coenzyme. This is Riboflavin kinase (FMN1) from Scheffersomyces stipitis (strain ATCC 58785 / CBS 6054 / NBRC 10063 / NRRL Y-11545) (Yeast).